The primary structure comprises 402 residues: Zinc finger protein 322 (402 aa).

Residues 43–65 (YQCLECKQNFCENLALIMCERTH) form a C2H2-type 1; atypical zinc finger. 8 C2H2-type zinc fingers span residues 71–93 (YKCD…QRIH), 99–121 (YKCS…QRTH), 127–149 (YTCD…QRSH), 155–177 (YLCS…RRTH), 183–205 (FKCL…QRTH), 211–233 (YKCN…KRVH), 239–261 (YKCG…QRVH), and 267–289 (YKCL…QATH). Residues 293-315 (FKCLEYEKSFNCSSDLIVHQRIH) form a C2H2-type 10; degenerate zinc finger. Residues 351–373 (YKYTVCDKSFHQSSALLQHQTVH) form a C2H2-type 11; degenerate zinc finger. Ser-391 bears the Phosphoserine mark.

The protein belongs to the krueppel C2H2-type zinc-finger protein family. Interacts with POU5F1. Ubiquitous. Highly expressed in heart and skeletal muscle.

The protein localises to the cytoplasm. It is found in the nucleus. Functionally, transcriptional activator. Important for maintenance of pluripotency in embryonic stem cells. Binds directly to the POU5F1 distal enhancer and the NANOG proximal promoter, and enhances expression of both genes. Can also bind to numerous other gene promoters and regulates expression of many other pluripotency factors, either directly or indirectly. Promotes inhibition of MAPK signaling during embryonic stem cell differentiation. The protein is Zinc finger protein 322 (ZNF322) of Homo sapiens (Human).